Here is a 312-residue protein sequence, read N- to C-terminus: UDP-N-acetylenolpyruvoylglucosamine reductase (312 aa).

Residues 33 to 199 enclose the FAD-binding PCMH-type domain; the sequence is RVGGKAEWYC…TGATLQLLPG (167 aa). Residue Arg178 is part of the active site. The active-site Proton donor is the Ser229. The active site involves Glu299.

The protein belongs to the MurB family. It depends on FAD as a cofactor.

The protein localises to the cytoplasm. The enzyme catalyses UDP-N-acetyl-alpha-D-muramate + NADP(+) = UDP-N-acetyl-3-O-(1-carboxyvinyl)-alpha-D-glucosamine + NADPH + H(+). Its pathway is cell wall biogenesis; peptidoglycan biosynthesis. In terms of biological role, cell wall formation. This Synechococcus sp. (strain JA-3-3Ab) (Cyanobacteria bacterium Yellowstone A-Prime) protein is UDP-N-acetylenolpyruvoylglucosamine reductase.